Consider the following 87-residue polypeptide: U14-lycotoxin-Ls1b (87 aa).

The first 20 residues, 1 to 20 (MNSKVFAVLLLLALSTCVLS), serve as a signal peptide directing secretion. A WAP domain is found at 21–66 (EKYCPTPRNTSCKKMNIRNNCCRDSDCTSNAFCCAEPCGNFCHKAS). Disulfide bonds link Cys24–Cys54, Cys32–Cys58, Cys41–Cys53, Cys42–Cys80, and Cys47–Cys62.

The protein belongs to the venom protein 11 family. 01 (wap-1) subfamily. Post-translationally, contains 5 disulfide bonds. In terms of tissue distribution, expressed by the venom gland.

The protein localises to the secreted. Its function is as follows. Has antibacterial activity. The chain is U14-lycotoxin-Ls1b from Lycosa singoriensis (Wolf spider).